The sequence spans 320 residues: Chorion protein S36 (320 aa).

A signal peptide spans M1 to A18. A run of 5 repeats spans residues A178 to V181, A258 to A261, A266 to A269, A274 to A277, and A290. The segment at A259–Y320 is disordered.

It belongs to the chorion protein S36 family.

The protein resides in the secreted. Its function is as follows. Chorion membrane (egg shell) protein; plays a role in protecting the egg from the environment. The polypeptide is Chorion protein S36 (Cp36) (Ceratitis capitata (Mediterranean fruit fly)).